The chain runs to 167 residues: Regulator of sigma D (167 aa).

Belongs to the Rsd/AlgQ family. As to quaternary structure, interacts with RpoD.

Its subcellular location is the cytoplasm. Functionally, binds RpoD and negatively regulates RpoD-mediated transcription activation by preventing the interaction between the primary sigma factor RpoD with the catalytic core of the RNA polymerase and with promoter DNA. May be involved in replacement of the RNA polymerase sigma subunit from RpoD to RpoS during the transition from exponential growth to the stationary phase. This is Regulator of sigma D from Yersinia enterocolitica serotype O:8 / biotype 1B (strain NCTC 13174 / 8081).